An 84-amino-acid polypeptide reads, in one-letter code: U8-theraphotoxin-Hhn1e (84 aa).

Residues 1–21 (MKVVLLVCLVWMMAMMELVSC) form the signal peptide. Cystine bridges form between cysteine 23–cysteine 35, cysteine 29–cysteine 44, cysteine 34–cysteine 67, cysteine 54–cysteine 75, and cysteine 69–cysteine 81.

Belongs to the AVIT (prokineticin) family. In terms of tissue distribution, expressed by the venom gland.

Its subcellular location is the secreted. This chain is U8-theraphotoxin-Hhn1e, found in Cyriopagopus hainanus (Chinese bird spider).